A 243-amino-acid chain; its full sequence is 1-(5-phosphoribosyl)-5-[(5-phosphoribosylamino)methylideneamino] imidazole-4-carboxamide isomerase (243 aa).

Asp10 (proton acceptor) is an active-site residue. Residue Asp128 is the Proton donor of the active site.

Belongs to the HisA/HisF family.

The protein resides in the cytoplasm. It carries out the reaction 1-(5-phospho-beta-D-ribosyl)-5-[(5-phospho-beta-D-ribosylamino)methylideneamino]imidazole-4-carboxamide = 5-[(5-phospho-1-deoxy-D-ribulos-1-ylimino)methylamino]-1-(5-phospho-beta-D-ribosyl)imidazole-4-carboxamide. The protein operates within amino-acid biosynthesis; L-histidine biosynthesis; L-histidine from 5-phospho-alpha-D-ribose 1-diphosphate: step 4/9. In Helicobacter hepaticus (strain ATCC 51449 / 3B1), this protein is 1-(5-phosphoribosyl)-5-[(5-phosphoribosylamino)methylideneamino] imidazole-4-carboxamide isomerase.